Reading from the N-terminus, the 145-residue chain is UPF0201 protein STK_09490 (145 aa).

This sequence belongs to the UPF0201 family.

The polypeptide is UPF0201 protein STK_09490 (Sulfurisphaera tokodaii (strain DSM 16993 / JCM 10545 / NBRC 100140 / 7) (Sulfolobus tokodaii)).